We begin with the raw amino-acid sequence, 391 residues long: Probable protein arginine N-methyltransferase 6.1 (391 aa).

A disordered region spans residues 1–35 (MLPSHLNGHSPLARRCPRLSAASPPATGDSDAAAA). Low complexity predominate over residues 20–35 (SAASPPATGDSDAAAA). One can recognise an SAM-dependent MTase PRMT-type domain in the interval 45 to 391 (DRIYFQSYSH…QTLVKDYAMR (347 aa)). Residues H58, R67, G91, E113, and E142 each coordinate S-adenosyl-L-methionine. Residues E156 and E165 contribute to the active site.

Belongs to the class I-like SAM-binding methyltransferase superfamily. Protein arginine N-methyltransferase family. PRMT6 subfamily.

Functionally, arginine methyltransferase that can both catalyze the formation of omega-N monomethylarginine (MMA) and asymmetrical dimethylarginine (aDMA). This chain is Probable protein arginine N-methyltransferase 6.1 (PRMT6.1), found in Oryza sativa subsp. japonica (Rice).